A 188-amino-acid polypeptide reads, in one-letter code: Adenine phosphoribosyltransferase (188 aa).

The protein belongs to the purine/pyrimidine phosphoribosyltransferase family. As to quaternary structure, homodimer.

Its subcellular location is the cytoplasm. It catalyses the reaction AMP + diphosphate = 5-phospho-alpha-D-ribose 1-diphosphate + adenine. The protein operates within purine metabolism; AMP biosynthesis via salvage pathway; AMP from adenine: step 1/1. Its function is as follows. Catalyzes a salvage reaction resulting in the formation of AMP, that is energically less costly than de novo synthesis. This Burkholderia lata (strain ATCC 17760 / DSM 23089 / LMG 22485 / NCIMB 9086 / R18194 / 383) protein is Adenine phosphoribosyltransferase.